Reading from the N-terminus, the 73-residue chain is Ocellatin-PT7 (73 aa).

Residues 1–22 (MAFLKKSLFLVLFLGLVSLSIC) form the signal peptide. A propeptide spanning residues 23–39 (DEEKRQDEDDDDDDDEE) is cleaved from the precursor.

In terms of tissue distribution, expressed by the skin glands.

The protein resides in the secreted. In terms of biological role, has antibacterial activity against Gram-negative bacteria E.coli ATCC 25922 (MIC=60 uM) and S.choleraesuis ATCC 14028 (MIC=240 uM) and against Gram-positive bacterium S.aureus ATCC 29313 (MIC=240 uM). Shows no hemolytic activity and no cytotoxicity. The sequence is that of Ocellatin-PT7 from Leptodactylus pustulatus (Ceara white-lipped frog).